The sequence spans 417 residues: GTP-binding protein YPT11 (417 aa).

The interval 1 to 34 is disordered; sequence MSQRKRYSLNVVTSPSIPSPTPSAPIRTNESNWE. Residues 97-104, 228-232, and 292-295 contribute to the GTP site; these read GDANVGKT, DTAGQ, and NKID. Residues cysteine 415 and cysteine 416 are each lipidated (S-geranylgeranyl cysteine).

Belongs to the small GTPase superfamily. Rab family. Interacts with MYO2 (via C-terminal tail domain). Interacts with YIF1, YIP3, YIP4 and YIP5.

It is found in the endoplasmic reticulum membrane. Its subcellular location is the bud tip. The protein resides in the bud neck. Its function is as follows. Involved in the positive control of both endoplasmic reticulum (ER) and mitochondrion inheritance during cell divison. Required for the MYO2-dependent retention of newly inherited mitochondria at the bud tip in developing daughter cells. In Saccharomyces cerevisiae (strain RM11-1a) (Baker's yeast), this protein is GTP-binding protein YPT11 (YPT11).